The primary structure comprises 260 residues: Thiazole synthase (260 aa).

The active-site Schiff-base intermediate with DXP is K100. 1-deoxy-D-xylulose 5-phosphate is bound by residues G161, 187–188, and 209–210; these read AG and NT.

The protein belongs to the ThiG family. In terms of assembly, homotetramer. Forms heterodimers with either ThiH or ThiS.

Its subcellular location is the cytoplasm. It catalyses the reaction [ThiS sulfur-carrier protein]-C-terminal-Gly-aminoethanethioate + 2-iminoacetate + 1-deoxy-D-xylulose 5-phosphate = [ThiS sulfur-carrier protein]-C-terminal Gly-Gly + 2-[(2R,5Z)-2-carboxy-4-methylthiazol-5(2H)-ylidene]ethyl phosphate + 2 H2O + H(+). The protein operates within cofactor biosynthesis; thiamine diphosphate biosynthesis. In terms of biological role, catalyzes the rearrangement of 1-deoxy-D-xylulose 5-phosphate (DXP) to produce the thiazole phosphate moiety of thiamine. Sulfur is provided by the thiocarboxylate moiety of the carrier protein ThiS. In vitro, sulfur can be provided by H(2)S. This Dechloromonas aromatica (strain RCB) protein is Thiazole synthase.